We begin with the raw amino-acid sequence, 66 residues long: Large ribosomal subunit protein bL31 (66 aa).

Zn(2+)-binding residues include C16, C18, C36, and C39.

The protein belongs to the bacterial ribosomal protein bL31 family. Type A subfamily. In terms of assembly, part of the 50S ribosomal subunit. The cofactor is Zn(2+).

In terms of biological role, binds the 23S rRNA. The polypeptide is Large ribosomal subunit protein bL31 (Geobacter metallireducens (strain ATCC 53774 / DSM 7210 / GS-15)).